A 338-amino-acid polypeptide reads, in one-letter code: Biotin synthase (338 aa).

The Radical SAM core domain occupies 46–270 (NEVQLSTLLS…VAVARITMPA (225 aa)). 3 residues coordinate [4Fe-4S] cluster: Cys61, Cys65, and Cys68. [2Fe-2S] cluster is bound by residues Cys105, Cys136, Cys196, and Arg274.

Belongs to the radical SAM superfamily. Biotin synthase family. As to quaternary structure, homodimer. Requires [4Fe-4S] cluster as cofactor. [2Fe-2S] cluster serves as cofactor.

It carries out the reaction (4R,5S)-dethiobiotin + (sulfur carrier)-SH + 2 reduced [2Fe-2S]-[ferredoxin] + 2 S-adenosyl-L-methionine = (sulfur carrier)-H + biotin + 2 5'-deoxyadenosine + 2 L-methionine + 2 oxidized [2Fe-2S]-[ferredoxin]. It participates in cofactor biosynthesis; biotin biosynthesis; biotin from 7,8-diaminononanoate: step 2/2. Functionally, catalyzes the conversion of dethiobiotin (DTB) to biotin by the insertion of a sulfur atom into dethiobiotin via a radical-based mechanism. This Rhizorhabdus wittichii (strain DSM 6014 / CCUG 31198 / JCM 15750 / NBRC 105917 / EY 4224 / RW1) (Sphingomonas wittichii) protein is Biotin synthase.